Consider the following 929-residue polypeptide: Bifunctional uridylyltransferase/uridylyl-removing enzyme (929 aa).

The interval 1 to 383 (MDSVTTEHKQ…RPTPAKRRVP (383 aa)) is uridylyltransferase. The segment at 384-739 (DSDDFIVDNN…VGFDEVRGVT (356 aa)) is uridylyl-removing. One can recognise an HD domain in the interval 499 to 622 (VDEHLIRCVG…VQSVEQMKLL (124 aa)). ACT domains are found at residues 740-822 (ELTI…VVAR) and 850-927 (VIEV…AVQP).

It belongs to the GlnD family. It depends on Mg(2+) as a cofactor.

The enzyme catalyses [protein-PII]-L-tyrosine + UTP = [protein-PII]-uridylyl-L-tyrosine + diphosphate. It catalyses the reaction [protein-PII]-uridylyl-L-tyrosine + H2O = [protein-PII]-L-tyrosine + UMP + H(+). Uridylyltransferase (UTase) activity is inhibited by glutamine, while glutamine activates uridylyl-removing (UR) activity. Its function is as follows. Modifies, by uridylylation and deuridylylation, the PII regulatory proteins (GlnB and homologs), in response to the nitrogen status of the cell that GlnD senses through the glutamine level. Under low glutamine levels, catalyzes the conversion of the PII proteins and UTP to PII-UMP and PPi, while under higher glutamine levels, GlnD hydrolyzes PII-UMP to PII and UMP (deuridylylation). Thus, controls uridylylation state and activity of the PII proteins, and plays an important role in the regulation of nitrogen fixation and metabolism. This is Bifunctional uridylyltransferase/uridylyl-removing enzyme from Bradyrhizobium diazoefficiens (strain JCM 10833 / BCRC 13528 / IAM 13628 / NBRC 14792 / USDA 110).